The following is a 217-amino-acid chain: Small ribosomal subunit protein uS3 (217 aa).

In terms of domain architecture, KH type-2 spans 38–106 (IRKFIDNELK…KVHINVIEIK (69 aa)).

The protein belongs to the universal ribosomal protein uS3 family. In terms of assembly, part of the 30S ribosomal subunit. Forms a tight complex with proteins S10 and S14.

Its function is as follows. Binds the lower part of the 30S subunit head. Binds mRNA in the 70S ribosome, positioning it for translation. This chain is Small ribosomal subunit protein uS3, found in Staphylococcus aureus (strain MSSA476).